The following is a 78-amino-acid chain: MSRVCQVTGKRPVAGNNRSHALNATKRRFLPNLHSHRFWVEGEKRFVTLRVSAKGMRVIDKKGIETVLADLRTRGEKY.

This sequence belongs to the bacterial ribosomal protein bL28 family.

This Pectobacterium atrosepticum (strain SCRI 1043 / ATCC BAA-672) (Erwinia carotovora subsp. atroseptica) protein is Large ribosomal subunit protein bL28.